The chain runs to 38 residues: Large ribosomal subunit protein bL36A (38 aa).

Belongs to the bacterial ribosomal protein bL36 family.

This chain is Large ribosomal subunit protein bL36A, found in Enterobacter sp. (strain 638).